We begin with the raw amino-acid sequence, 707 residues long: Probable potassium transporter 17 (707 aa).

The disordered stretch occupies residues 1–25; sequence MDLEAGSIRPRSDGEGGGPAAGRET. Over 1–34 the chain is Cytoplasmic; it reads MDLEAGSIRPRSDGEGGGPAAGRETDDSNVWKDL. The chain crosses the membrane as a helical span at residues 35–55; the sequence is FLAYKTLGVVFGGLVTSPLYV. Topologically, residues 56–71 are extracellular; it reads YPSMNLSSPTEADYLG. N60 is a glycosylation site (N-linked (GlcNAc...) asparagine). The helical transmembrane segment at 72 to 92 threads the bilayer; sequence IYSIMFWTLTLIGVVKYVCIA. Residues 93-157 are Cytoplasmic-facing; that stretch reads LNADDHGEGG…FFEQSITARR (65 aa). The chain crosses the membrane as a helical span at residues 158 to 178; the sequence is VLLFVAVLGMCMLIGDGILTP. Residues 179–194 lie on the Extracellular side of the membrane; it reads AISVLSAIDGIRGPFP. The helical transmembrane segment at 195–215 threads the bilayer; that stretch reads TVSKPVVEALSAAILIGLFLL. Residues 216–222 are Cytoplasmic-facing; sequence QKYGTSK. A helical membrane pass occupies residues 223–243; that stretch reads VSFLFSPIMAAWTFTTPIIGL. At 244-276 the chain is on the extracellular side; it reads YSIVHYYPGIFKAISPYYIVHFFLRNKRQGWQL. A helical membrane pass occupies residues 277 to 297; the sequence is LGGTVLCITGAEAMFADLGHF. Residues 298-305 lie on the Cytoplasmic side of the membrane; sequence SKKAIQIA. Residues 306 to 326 form a helical membrane-spanning segment; that stretch reads FLSSIYPSLVLTYAGQTAYLI. The Extracellular portion of the chain corresponds to 327-343; that stretch reads NNVNDFGDGFYKFVPRP. The chain crosses the membrane as a helical span at residues 344-364; the sequence is VYWPMFVVATLAAIVASQSLI. Over 365–402 the chain is Cytoplasmic; sequence SATFSVIKQSVVLDYFPRVKVVHTSQHKEGEVYSPEIN. The chain crosses the membrane as a helical span at residues 403–423; the sequence is YILMVLCVGVILGFGGGKAIG. Topologically, residues 424–427 are extracellular; sequence NAFG. A helical transmembrane segment spans residues 428–448; the sequence is VVVIMVMLITTVLLTLVMIII. At 449-454 the chain is on the cytoplasmic side; the sequence is WRTPLV. Residues 455–475 form a helical membrane-spanning segment; it reads LAGLYFVPFFIMEGAYVSAVF. The Extracellular portion of the chain corresponds to 476–480; that stretch reads TKIPE. The helical transmembrane segment at 481–501 threads the bilayer; that stretch reads GGWLPFAVSITLAMIMFGWYY. Topologically, residues 502 to 707 are cytoplasmic; the sequence is GRQRKFEYEM…RVEIGMLYKV (206 aa).

It belongs to the HAK/KUP transporter (TC 2.A.72.3) family.

Its subcellular location is the membrane. In terms of biological role, high-affinity potassium transporter. In Oryza sativa subsp. japonica (Rice), this protein is Probable potassium transporter 17 (HAK17).